We begin with the raw amino-acid sequence, 400 residues long: Elongation factor Tu (400 aa).

The tr-type G domain occupies K10–Q208. A G1 region spans residues G19–T26. G19–T26 lines the GTP pocket. Residue T26 participates in Mg(2+) binding. The interval G60–N64 is G2. Positions D81–G84 are G3. GTP is bound by residues D81–H85 and N136–D139. The interval N136 to D139 is G4. The tract at residues S174 to L176 is G5.

Belongs to the TRAFAC class translation factor GTPase superfamily. Classic translation factor GTPase family. EF-Tu/EF-1A subfamily. Monomer.

It is found in the cytoplasm. The enzyme catalyses GTP + H2O = GDP + phosphate + H(+). Functionally, GTP hydrolase that promotes the GTP-dependent binding of aminoacyl-tRNA to the A-site of ribosomes during protein biosynthesis. This is Elongation factor Tu from Thermosipho africanus (strain TCF52B).